Consider the following 147-residue polypeptide: MTIKVHHLRPAPGAKTTKTRVGRGEGSKGKTAGRGTKGSKARKNISAAFEGGQMPIHMRLPKMKGFKNKFKVTFQVVNLERLAELFPNGGQVGPAELVDAGAVRKGQPVKVLGTGDLGGVTLQVSAHAFSASAKEKITAAGGSITEL.

The interval 1–42 (MTIKVHHLRPAPGAKTTKTRVGRGEGSKGKTAGRGTKGSKAR) is disordered.

This sequence belongs to the universal ribosomal protein uL15 family. As to quaternary structure, part of the 50S ribosomal subunit.

Binds to the 23S rRNA. The polypeptide is Large ribosomal subunit protein uL15 (Salinispora tropica (strain ATCC BAA-916 / DSM 44818 / JCM 13857 / NBRC 105044 / CNB-440)).